Consider the following 256-residue polypeptide: Triosephosphate isomerase (256 aa).

12–14 serves as a coordination point for substrate; the sequence is NWK. His-99 acts as the Electrophile in catalysis. Glu-171 functions as the Proton acceptor in the catalytic mechanism. Substrate-binding positions include Gly-177, Ser-217, and 238–239; that span reads GG.

Belongs to the triosephosphate isomerase family. Homodimer.

Its subcellular location is the cytoplasm. It carries out the reaction D-glyceraldehyde 3-phosphate = dihydroxyacetone phosphate. It functions in the pathway carbohydrate biosynthesis; gluconeogenesis. It participates in carbohydrate degradation; glycolysis; D-glyceraldehyde 3-phosphate from glycerone phosphate: step 1/1. Functionally, involved in the gluconeogenesis. Catalyzes stereospecifically the conversion of dihydroxyacetone phosphate (DHAP) to D-glyceraldehyde-3-phosphate (G3P). This Rubrobacter xylanophilus (strain DSM 9941 / JCM 11954 / NBRC 16129 / PRD-1) protein is Triosephosphate isomerase.